Consider the following 416-residue polypeptide: Gamma-glutamyl phosphate reductase (416 aa).

Belongs to the gamma-glutamyl phosphate reductase family.

Its subcellular location is the cytoplasm. It catalyses the reaction L-glutamate 5-semialdehyde + phosphate + NADP(+) = L-glutamyl 5-phosphate + NADPH + H(+). Its pathway is amino-acid biosynthesis; L-proline biosynthesis; L-glutamate 5-semialdehyde from L-glutamate: step 2/2. Functionally, catalyzes the NADPH-dependent reduction of L-glutamate 5-phosphate into L-glutamate 5-semialdehyde and phosphate. The product spontaneously undergoes cyclization to form 1-pyrroline-5-carboxylate. This Leptospira interrogans serogroup Icterohaemorrhagiae serovar Lai (strain 56601) protein is Gamma-glutamyl phosphate reductase.